The primary structure comprises 566 residues: Glucose starvation modulator protein 1 (566 aa).

Residues 20–48 constitute a DNA-binding region (zn(2)-C6 fungal-type); sequence CVFCHQKHLQCSNERPCKNCVKRNIAHGC. 2 disordered regions span residues 63-92 and 250-270; these read GVPG…SPMD and KQAS…NTLS. Positions 253–270 are enriched in low complexity; sequence SPSPSNTSTSENNTNTLS.

Belongs to the ERT1/acuK family.

It is found in the nucleus. Functionally, transcription factor which regulates nonfermentable carbon utilization. This Candida albicans (strain WO-1) (Yeast) protein is Glucose starvation modulator protein 1 (GSM1).